Here is a 210-residue protein sequence, read N- to C-terminus: Outer-membrane lipoprotein LolB (210 aa).

Positions 1–26 are cleaved as a signal peptide; that stretch reads MSKLKIDTKRRFSLLIALVLIISLSS. Residue Cys-27 is the site of N-palmitoyl cysteine attachment. A lipid anchor (S-diacylglycerol cysteine) is attached at Cys-27.

This sequence belongs to the LolB family. In terms of assembly, monomer.

Its subcellular location is the cell outer membrane. Plays a critical role in the incorporation of lipoproteins in the outer membrane after they are released by the LolA protein. In Francisella tularensis subsp. novicida (strain U112), this protein is Outer-membrane lipoprotein LolB.